The chain runs to 325 residues: BTB/POZ domain-containing protein KCTD12 (325 aa).

Positions 1–28 are disordered; that stretch reads MALADSTRGLPNGGGGGGGSGSSSSSAE. A2 carries the post-translational modification N-acetylalanine. Gly residues predominate over residues 11-21; sequence PNGGGGGGGSG. Y119 carries the phosphotyrosine modification. Residues 129–202 are disordered; the sequence is LGAPQQPGPG…PLLTPSQSLD (74 aa). A phosphoserine mark is found at S151, S171, and S185. T196 is subject to Phosphothreonine. S200 is modified (phosphoserine).

Interacts as a tetramer with GABBR1 and GABBR2. Present in a variety of fetal organs, with highest expression levels in the cochlea and brain and, in stark contrast, is detected only at extremely low levels in adult organs, such as brain and lung.

The protein resides in the presynaptic cell membrane. It is found in the postsynaptic cell membrane. Auxiliary subunit of GABA-B receptors that determine the pharmacology and kinetics of the receptor response. Increases agonist potency and markedly alter the G-protein signaling of the receptors by accelerating onset and promoting desensitization. This chain is BTB/POZ domain-containing protein KCTD12 (KCTD12), found in Homo sapiens (Human).